The following is a 423-amino-acid chain: Serine hydroxymethyltransferase 2 (423 aa).

(6S)-5,6,7,8-tetrahydrofolate-binding positions include Leu-121 and 125–127 (GHL). N6-(pyridoxal phosphate)lysine is present on Lys-230. 356–358 (SPF) serves as a coordination point for (6S)-5,6,7,8-tetrahydrofolate.

The protein belongs to the SHMT family. In terms of assembly, homodimer. The cofactor is pyridoxal 5'-phosphate.

It is found in the cytoplasm. It carries out the reaction (6R)-5,10-methylene-5,6,7,8-tetrahydrofolate + glycine + H2O = (6S)-5,6,7,8-tetrahydrofolate + L-serine. It functions in the pathway one-carbon metabolism; tetrahydrofolate interconversion. The protein operates within amino-acid biosynthesis; glycine biosynthesis; glycine from L-serine: step 1/1. Catalyzes the reversible interconversion of serine and glycine with tetrahydrofolate (THF) serving as the one-carbon carrier. This reaction serves as the major source of one-carbon groups required for the biosynthesis of purines, thymidylate, methionine, and other important biomolecules. Also exhibits THF-independent aldolase activity toward beta-hydroxyamino acids, producing glycine and aldehydes, via a retro-aldol mechanism. The protein is Serine hydroxymethyltransferase 2 of Pectobacterium atrosepticum (strain SCRI 1043 / ATCC BAA-672) (Erwinia carotovora subsp. atroseptica).